Here is a 104-residue protein sequence, read N- to C-terminus: Iron-sulfur cluster assembly protein CyaY (104 aa).

This sequence belongs to the frataxin family.

Functionally, involved in iron-sulfur (Fe-S) cluster assembly. May act as a regulator of Fe-S biogenesis. This Tolumonas auensis (strain DSM 9187 / NBRC 110442 / TA 4) protein is Iron-sulfur cluster assembly protein CyaY.